The following is a 382-amino-acid chain: Na(+)/H(+) antiporter NhaA 2 (382 aa).

Helical transmembrane passes span 7–27, 58–78, 94–114, 124–144, 153–173, 178–198, 199–219, 255–275, 291–311, 327–347, and 361–381; these read MVLS…LALL, LDLW…GLEL, SLPI…FIAI, GWAI…MLLG, LFLL…IALF, LSAL…LLNY, YHIT…IAML, NPWV…GIDI, IILG…FIAI, FYGI…IDGL, and LAIL…LKIV.

This sequence belongs to the NhaA Na(+)/H(+) (TC 2.A.33) antiporter family.

It is found in the cell inner membrane. The catalysed reaction is Na(+)(in) + 2 H(+)(out) = Na(+)(out) + 2 H(+)(in). Functionally, na(+)/H(+) antiporter that extrudes sodium in exchange for external protons. In Campylobacter jejuni (strain RM1221), this protein is Na(+)/H(+) antiporter NhaA 2.